The following is a 189-amino-acid chain: Small ribosomal subunit protein uS5 (189 aa).

In terms of domain architecture, S5 DRBM spans 20 to 83; that stretch reads FVDRLVHINR…ESAKRALIRV (64 aa).

This sequence belongs to the universal ribosomal protein uS5 family. As to quaternary structure, part of the 30S ribosomal subunit. Contacts proteins S4 and S8.

With S4 and S12 plays an important role in translational accuracy. Functionally, located at the back of the 30S subunit body where it stabilizes the conformation of the head with respect to the body. The protein is Small ribosomal subunit protein uS5 of Beijerinckia indica subsp. indica (strain ATCC 9039 / DSM 1715 / NCIMB 8712).